The chain runs to 70 residues: Large ribosomal subunit protein eL38 (70 aa).

The protein belongs to the eukaryotic ribosomal protein eL38 family.

The sequence is that of Large ribosomal subunit protein eL38 (RpL38) from Lonomia obliqua (Moth).